The primary structure comprises 25 residues: GVVDILKGAAKDLAGHLATKVMNKL.

Position 25 is a leucine amide (Leu25).

Belongs to the frog skin active peptide (FSAP) family. Ocellatin subfamily. Expressed by the skin glands.

The protein resides in the secreted. In terms of biological role, antimicrobial peptide with activity against Gram-negative bacteria but without activity against Gram-positive bacteria. Shows a low activity in stimulating insulin release from rat BRIN-BD11 beta cells, and acts without loss of integrity of the plasma membrane. Has very low hemolytic activity. Shows weak amphipathicity in its alpha-helical conformation. The polypeptide is Ocellatin-L1 (Leptodactylus laticeps (Santa Fe frog)).